The following is a 255-amino-acid chain: Probable iron chelatin transport ATP-binding protein HP_0888 (255 aa).

The 238-residue stretch at 3 to 240 (LEVKNLSFKY…HNLSALYDTP (238 aa)) folds into the ABC transporter domain. 35–42 (APNGSGKT) contributes to the ATP binding site.

This sequence belongs to the ABC transporter superfamily.

The protein resides in the cell inner membrane. Functionally, part of a binding-protein-dependent transport system for an iron chelatin. Probably responsible for energy coupling to the transport system (Potential). This is Probable iron chelatin transport ATP-binding protein HP_0888 from Helicobacter pylori (strain ATCC 700392 / 26695) (Campylobacter pylori).